The chain runs to 244 residues: Kallikrein-6 (244 aa).

The first 16 residues, 1 to 16 (MKKLMVVLSLIAAAWA), serve as a signal peptide directing secretion. Residues 17–21 (EEQNK) constitute a propeptide, activation peptide. Residues 22 to 242 (LVHGGPCDKT…YTNWIQKTIQ (221 aa)) form the Peptidase S1 domain. Disulfide bonds link cysteine 28–cysteine 157, cysteine 47–cysteine 63, cysteine 131–cysteine 231, cysteine 138–cysteine 203, cysteine 168–cysteine 182, and cysteine 193–cysteine 218. Active-site charge relay system residues include histidine 62 and aspartate 106. The N-linked (GlcNAc...) asparagine glycan is linked to asparagine 134. Serine 197 serves as the catalytic Charge relay system.

Inactivated by autolytic cleavage after Arg-80. As to expression, in fluids, highest levels found in milk of lactating women followed by cerebrospinal fluid, nipple aspirate fluid and breast cyst fluid. Also found in serum, seminal plasma and some amniotic fluids and breast tumor cytosolic extracts. Not detected in urine. At the tissue level, highest concentrations found in glandular tissues such as salivary glands followed by lung, colon, fallopian tube, placenta, breast, pituitary and kidney. Not detected in skin, spleen, bone, thyroid, heart, ureter, liver, muscle, endometrium, testis, pancreas, seminal vesicle, ovary, adrenals and prostate. In brain, detected in gray matter neurons (at protein level). Colocalizes with pathological inclusions such as Lewy bodies and glial cytoplasmic inclusions. Overexpressed in primary breast tumors but not expressed in metastatic tumors.

It is found in the secreted. The protein localises to the nucleus. It localises to the nucleolus. The protein resides in the cytoplasm. Its subcellular location is the mitochondrion. It is found in the microsome. Its activity is regulated as follows. Inhibited by a range of serine protease inhibitors including soybean trypsin inhibitor, benzamidine and serpins. Activated by a range of glycosaminoglycans including chondroitin sulfate, dermatan sulfate, heparan sulfate and heparin. Its function is as follows. Serine protease which exhibits a preference for Arg over Lys in the substrate P1 position and for Ser or Pro in the P2 position. Shows activity against amyloid precursor protein, myelin basic protein, gelatin, casein and extracellular matrix proteins such as fibronectin, laminin, vitronectin and collagen. Degrades alpha-synuclein and prevents its polymerization, indicating that it may be involved in the pathogenesis of Parkinson disease and other synucleinopathies. May be involved in regulation of axon outgrowth following spinal cord injury. Tumor cells treated with a neutralizing KLK6 antibody migrate less than control cells, suggesting a role in invasion and metastasis. The protein is Kallikrein-6 (KLK6) of Homo sapiens (Human).